The following is a 578-amino-acid chain: 2-hydroxyacyl-CoA lyase 1 (578 aa).

At S4 the chain carries Phosphoserine. E60 serves as a coordination point for thiamine diphosphate. 3 positions are modified to N6-succinyllysine: K351, K358, and K365. The thiamine pyrophosphate binding stretch occupies residues T401–Y486. D455 and N482 together coordinate Mg(2+). The short motif at S576 to M578 is the Microbody targeting signal element.

It belongs to the TPP enzyme family. In terms of assembly, homotetramer. Mg(2+) serves as cofactor. It depends on thiamine diphosphate as a cofactor. Widely expressed.

Its subcellular location is the peroxisome. It carries out the reaction a 2-hydroxy-3-methyl fatty acyl-CoA = a 2-methyl-branched fatty aldehyde + formyl-CoA. It catalyses the reaction an (R)-2-hydroxy-long-chain-fatty acyl-CoA = a long-chain fatty aldehyde + formyl-CoA. The catalysed reaction is 2-hydroxy-3-methylhexadecanoyl-CoA = 2-methylpentadecanal + formyl-CoA. The enzyme catalyses 2-hydroxyoctadecanoyl-CoA = heptadecanal + formyl-CoA. It carries out the reaction 2-hydroxyphytanoyl-CoA = 2,6,10,14-tetramethylpentadecanal + formyl-CoA. Its pathway is lipid metabolism; fatty acid metabolism. Functionally, peroxisomal 2-OH acyl-CoA lyase involved in the cleavage (C1 removal) reaction in the fatty acid alpha-oxydation in a thiamine pyrophosphate (TPP)-dependent manner. Involved in the degradation of 3-methyl-branched fatty acids like phytanic acid and the shortening of 2-hydroxy long-chain fatty acids. Plays a significant role in the biosynthesis of heptadecanal in the liver. The polypeptide is 2-hydroxyacyl-CoA lyase 1 (Homo sapiens (Human)).